Reading from the N-terminus, the 187-residue chain is UPF0301 protein VS_2679 (187 aa).

It belongs to the UPF0301 (AlgH) family.

The chain is UPF0301 protein VS_2679 from Vibrio atlanticus (strain LGP32) (Vibrio splendidus (strain Mel32)).